Consider the following 419-residue polypeptide: UDP-N-acetylmuramoylalanine--D-glutamate ligase (419 aa).

Residue 109-115 (GSAGKTT) participates in ATP binding.

The protein belongs to the MurCDEF family.

The protein resides in the cytoplasm. It carries out the reaction UDP-N-acetyl-alpha-D-muramoyl-L-alanine + D-glutamate + ATP = UDP-N-acetyl-alpha-D-muramoyl-L-alanyl-D-glutamate + ADP + phosphate + H(+). Its pathway is cell wall biogenesis; peptidoglycan biosynthesis. Its function is as follows. Cell wall formation. Catalyzes the addition of glutamate to the nucleotide precursor UDP-N-acetylmuramoyl-L-alanine (UMA). This Chlamydia caviae (strain ATCC VR-813 / DSM 19441 / 03DC25 / GPIC) (Chlamydophila caviae) protein is UDP-N-acetylmuramoylalanine--D-glutamate ligase.